Consider the following 215-residue polypeptide: Glycerol-3-phosphate acyltransferase (215 aa).

Transmembrane regions (helical) follow at residues 14-34 (SSSALIVLAYLIGSIPFAVVV), 63-83 (TAAALTLLGDAAKGWFALWLA), 92-112 (WGAYALVALAVFLGHLYPLFL), 128-148 (MAIEPWLAVATIATWLIVAVF), and 154-174 (LAALVAAFFAPVYYVFGSGAA).

This sequence belongs to the PlsY family. In terms of assembly, probably interacts with PlsX.

Its subcellular location is the cell inner membrane. It catalyses the reaction an acyl phosphate + sn-glycerol 3-phosphate = a 1-acyl-sn-glycero-3-phosphate + phosphate. It functions in the pathway lipid metabolism; phospholipid metabolism. In terms of biological role, catalyzes the transfer of an acyl group from acyl-phosphate (acyl-PO(4)) to glycerol-3-phosphate (G3P) to form lysophosphatidic acid (LPA). This enzyme utilizes acyl-phosphate as fatty acyl donor, but not acyl-CoA or acyl-ACP. The polypeptide is Glycerol-3-phosphate acyltransferase (Bordetella bronchiseptica (strain ATCC BAA-588 / NCTC 13252 / RB50) (Alcaligenes bronchisepticus)).